A 146-amino-acid chain; its full sequence is Hemoglobin subunit beta (146 aa).

Residue Val-1 is modified to N-acetylvaline. The region spanning 2–146 (HLTAEEKSAV…VANALAHKYH (145 aa)) is the Globin domain. Ser-44 bears the Phosphoserine mark. Lys-59 is subject to N6-acetyllysine. His-63 provides a ligand contact to heme b. N6-acetyllysine is present on Lys-82. His-92 serves as a coordination point for heme b. Residue Cys-93 is modified to S-nitrosocysteine. Lys-144 is subject to N6-acetyllysine.

The protein belongs to the globin family. As to quaternary structure, heterotetramer of two alpha chains and two beta chains. In terms of tissue distribution, red blood cells.

Involved in oxygen transport from the lung to the various peripheral tissues. In Tamias merriami (Merriam's chipmunk), this protein is Hemoglobin subunit beta.